The sequence spans 384 residues: WD repeat-containing protein 55 (384 aa).

The segment at 1–33 (MDPTCQESPAEDSNNEEDLDSTKAAPRIRDTPE) is disordered. Residues 9–19 (PAEDSNNEEDL) are compositionally biased toward acidic residues. WD repeat units follow at residues 36 to 75 (VLEAPASGLAFHPTRDLLAAGDVDGDVFVFAYSCQEGETK), 82 to 121 (HHLKSCRAVVFSEDGQKLVTVSKDKAIHVLDVEQGQLERR), 125 to 163 (AHSAPINSLLLVDENVLVTGDDTGGIRLWDQRKEGPLMD), 166 to 205 (QHEEYIADMALDPAKKLLLTASGDGCLGVFNIKRRRFELL), 208 to 247 (PQSGDLTSVALMKYGKKVACGSSEGTIYLFNWNGFGATSD), 250 to 289 (ALRAESIDCMVPVTENLLCTGSTDGIIRAVNILPNRVVGT), and 293 to 332 (HAGEPVEELALSHCGHFLASSGHDQRLKFWDMTQLRTVVV). A phosphoserine mark is found at serine 354 and serine 383. Positions 362-384 (LREDEEEAKAPEEVSGESDDDSD) are disordered. Residues 375–384 (VSGESDDDSD) are compositionally biased toward acidic residues.

This sequence belongs to the WD repeat WDR55 family.

The protein localises to the nucleus. The protein resides in the nucleolus. It localises to the cytoplasm. Functionally, nucleolar protein that acts as a modulator of rRNA synthesis. Plays a central role during organogenesis. This is WD repeat-containing protein 55 (Wdr55) from Rattus norvegicus (Rat).